Consider the following 252-residue polypeptide: Triosephosphate isomerase (252 aa).

Position 10-12 (10-12 (NWK)) interacts with substrate. Residue His-96 is the Electrophile of the active site. Glu-168 (proton acceptor) is an active-site residue. Residues Gly-174, Ser-214, and 235-236 (GG) contribute to the substrate site.

It belongs to the triosephosphate isomerase family. As to quaternary structure, homodimer.

It is found in the cytoplasm. The catalysed reaction is D-glyceraldehyde 3-phosphate = dihydroxyacetone phosphate. It participates in carbohydrate biosynthesis; gluconeogenesis. It functions in the pathway carbohydrate degradation; glycolysis; D-glyceraldehyde 3-phosphate from glycerone phosphate: step 1/1. Its function is as follows. Involved in the gluconeogenesis. Catalyzes stereospecifically the conversion of dihydroxyacetone phosphate (DHAP) to D-glyceraldehyde-3-phosphate (G3P). In Streptococcus agalactiae serotype Ia (strain ATCC 27591 / A909 / CDC SS700), this protein is Triosephosphate isomerase.